A 202-amino-acid chain; its full sequence is Securin (202 aa).

Residues 36-55 (DGRSQVSTPHVGKMFDAPPA) form a disordered region. Residues 61 to 64 (RKAL) carry the D-box motif. Short sequence motifs (TEK-box) lie at residues 71–73 (TEK) and 94–96 (TEK). An SH3-binding motif is present at residues 163–173 (PPSPLKMPPLL). A Phosphoserine; by CDK1 modification is found at Ser165.

Belongs to the securin family. In terms of assembly, interacts with RPS10 and DNAJA1. Interacts with the caspase-like ESPL1, and prevents its protease activity probably by covering its active site. Interacts with TP53 and blocks its activity probably by blocking its binding to DNA. Interacts with the Ku 70 kDa subunit of ds-DNA kinase. Interacts with PTTG1IP. Post-translationally, phosphorylated at Ser-165 by CDK1 during mitosis. In terms of processing, phosphorylated in vitro by ds-DNA kinase. Ubiquitinated through 'Lys-11' linkage of ubiquitin moieties by the anaphase promoting complex (APC) at the onset of anaphase, conducting to its degradation. 'Lys-11'-linked ubiquitination is mediated by the E2 ligase UBE2C/UBCH10.

It is found in the cytoplasm. Its subcellular location is the nucleus. In terms of biological role, regulatory protein, which plays a central role in chromosome stability, in the p53/TP53 pathway, and DNA repair. Probably acts by blocking the action of key proteins. During the mitosis, it blocks Separase/ESPL1 function, preventing the proteolysis of the cohesin complex and the subsequent segregation of the chromosomes. At the onset of anaphase, it is ubiquitinated, conducting to its destruction and to the liberation of ESPL1. Its function is however not limited to a blocking activity, since it is required to activate ESPL1. Negatively regulates the transcriptional activity and related apoptosis activity of TP53. The negative regulation of TP53 may explain the strong transforming capability of the protein when it is overexpressed. May also play a role in DNA repair via its interaction with Ku, possibly by connecting DNA damage-response pathways with sister chromatid separation. This is Securin (PTTG1) from Bos taurus (Bovine).